We begin with the raw amino-acid sequence, 382 residues long: Telomere-binding protein OPG082 (382 aa).

This sequence belongs to the orthopoxvirus OPG082 family.

It is found in the virion. Its function is as follows. Binds to the hairpin form of the viral telomeric sequence. Might direct genome encapsidation into the virus particle. This is Telomere-binding protein OPG082 (OPG082) from Variola virus (isolate Human/India/Ind3/1967) (VARV).